The primary structure comprises 288 residues: Energy-coupling factor transporter ATP-binding protein EcfA3 (288 aa).

Positions 3-245 constitute an ABC transporter domain; that stretch reads INFRNVSFSY…ESYLRKEKLR (243 aa). 40 to 47 contributes to the ATP binding site; sequence GHTGSGKS.

Belongs to the ABC transporter superfamily. Energy-coupling factor EcfA family. As to quaternary structure, forms a stable energy-coupling factor (ECF) transporter complex composed of 2 membrane-embedded substrate-binding proteins (S component), 2 ATP-binding proteins (A component) and 2 transmembrane proteins (T component).

The protein localises to the cell membrane. In terms of biological role, ATP-binding (A) component of a common energy-coupling factor (ECF) ABC-transporter complex. Unlike classic ABC transporters this ECF transporter provides the energy necessary to transport a number of different substrates. The sequence is that of Energy-coupling factor transporter ATP-binding protein EcfA3 from Oenococcus oeni (strain ATCC BAA-331 / PSU-1).